The primary structure comprises 305 residues: Ribonuclease BN (305 aa).

The Zn(2+) site is built by His-64, His-66, Asp-68, His-69, His-141, Asp-212, and His-270. Asp-68 functions as the Proton acceptor in the catalytic mechanism.

This sequence belongs to the RNase Z family. RNase BN subfamily. Homodimer. Requires Zn(2+) as cofactor.

Functionally, zinc phosphodiesterase, which has both exoribonuclease and endoribonuclease activities. This Escherichia coli O81 (strain ED1a) protein is Ribonuclease BN.